Here is a 329-residue protein sequence, read N- to C-terminus: Bifunctional muramidase/DL-endopeptidase CwlT (329 aa).

An N-terminal signal peptide occupies residues 1–29 (MISKKVVLPLVFSAPFIFFFVLCIVVVMT). The segment at 59–192 (RFRAVFEKYA…SYVDHVMRYV (134 aa)) is muramidase. The NlpC/P60 domain maps to 206–329 (MDFYETVMKE…DHLVSFGRIK (124 aa)). Catalysis depends on C237, which acts as the Nucleophile. The active-site Proton acceptor is the H290. N302 is an active-site residue.

It belongs to the peptidase C40 family.

It is found in the secreted. The enzyme catalyses Hydrolysis of (1-&gt;4)-beta-linkages between N-acetylmuramic acid and N-acetyl-D-glucosamine residues in a peptidoglycan and between N-acetyl-D-glucosamine residues in chitodextrins.. Exhibits both muramidase and DL-endopeptidase activities. The N-terminal region acts as a N-acetylmuramidase, which cleaves the bond between N-acetylmuramic acid and N-acetyl-D-glucosamine (MurNAc-GlcNAc) in peptidoglycan. The C-terminal region acts as a DL-endopeptidase that cleaves the bond between D-gamma-glutamate and meso-diaminopimelic acid. Cannot degrade purified B.anthracis peptidoglycan, which differ from those of B.subtilis. CwlT is required for ICEBs1 conjugation: the muramidase activity is essential, whereas the peptidase activity is partially dispensable for transfer of ICEBs1. The chain is Bifunctional muramidase/DL-endopeptidase CwlT from Bacillus subtilis (strain 168).